The sequence spans 242 residues: Pyridoxine 5'-phosphate synthase (242 aa).

Residue asparagine 6 coordinates 3-amino-2-oxopropyl phosphate. 8–9 (DH) lines the 1-deoxy-D-xylulose 5-phosphate pocket. Arginine 17 provides a ligand contact to 3-amino-2-oxopropyl phosphate. The active-site Proton acceptor is histidine 42. Residues arginine 44 and histidine 49 each contribute to the 1-deoxy-D-xylulose 5-phosphate site. Glutamate 69 functions as the Proton acceptor in the catalytic mechanism. Threonine 99 contacts 1-deoxy-D-xylulose 5-phosphate. Histidine 190 acts as the Proton donor in catalysis. Residues glycine 191 and 212–213 (GH) each bind 3-amino-2-oxopropyl phosphate.

This sequence belongs to the PNP synthase family. As to quaternary structure, homooctamer; tetramer of dimers.

The protein localises to the cytoplasm. It catalyses the reaction 3-amino-2-oxopropyl phosphate + 1-deoxy-D-xylulose 5-phosphate = pyridoxine 5'-phosphate + phosphate + 2 H2O + H(+). The protein operates within cofactor biosynthesis; pyridoxine 5'-phosphate biosynthesis; pyridoxine 5'-phosphate from D-erythrose 4-phosphate: step 5/5. Functionally, catalyzes the complicated ring closure reaction between the two acyclic compounds 1-deoxy-D-xylulose-5-phosphate (DXP) and 3-amino-2-oxopropyl phosphate (1-amino-acetone-3-phosphate or AAP) to form pyridoxine 5'-phosphate (PNP) and inorganic phosphate. The protein is Pyridoxine 5'-phosphate synthase of Neisseria meningitidis serogroup C.